We begin with the raw amino-acid sequence, 907 residues long: Catenin alpha-1 (907 aa).

At Thr2 the chain carries N-acetylthreonine. The tract at residues 2–228 (TAVHAGNINF…PILYTASQAC (227 aa)) is involved in homodimerization. Lys57 is covalently cross-linked (Glycyl lysine isopeptide (Lys-Gly) (interchain with G-Cter in SUMO2)). Residues 97-148 (VRKQGDLMKSAAGEFADDPCSSVKRGNMVRAARALLSAVTRLLILADMADVY) are interaction with JUP and CTNNB1. Phosphoserine is present on residues Ser264, Ser268, Ser296, and Ser298. The tract at residues 326-395 (TRDDRRERIV…AVMDHVSDSF (70 aa)) is interaction with alpha-actinin. Residue Thr635 is modified to Phosphothreonine. At Ser642 the chain carries Phosphoserine. Thr646 is modified (phosphothreonine). Phosphoserine is present on residues Ser653 and Ser656. A Phosphothreonine modification is found at Thr659. Residue Lys798 forms a Glycyl lysine isopeptide (Lys-Gly) (interchain with G-Cter in SUMO2) linkage. Ser852 is modified (phosphoserine). Positions 865-881 (PEKKPLVKREKQDETQT) are enriched in basic and acidic residues. Residues 865–895 (PEKKPLVKREKQDETQTKIKRASQKKHVNPV) are disordered. Residues 882-892 (KIKRASQKKHV) are compositionally biased toward basic residues.

It belongs to the vinculin/alpha-catenin family. Monomer and homodimer; the monomer preferentially binds to CTNNB1 and the homodimer to actin. Component of an cadherin:catenin adhesion complex composed of at least of CDH26, beta-catenin/CTNNB1, alpha-catenin/CTNNA1 and p120 catenin/CTNND1. Possible component of an E-cadherin/ catenin adhesion complex together with E-cadherin/CDH1 and beta-catenin/CTNNB1 or gamma-catenin/JUP; the complex is located to adherens junctions. The stable association of CTNNA1 is controversial as CTNNA1 was shown not to bind to F-actin when assembled in the complex. Alternatively, the CTNNA1-containing complex may be linked to F-actin by other proteins such as LIMA1. Binds AFDN and F-actin. Interacts with ARHGAP21. Interacts with AJUBA. Interacts with LIMA1. Interacts with vinculin/VCL. Interacts with TJP2/ZO2 (via N-terminus). Interacts with TJP1/ZO1 (via N-terminus). Post-translationally, sumoylated. In terms of processing, phosphorylation seems to contribute to the strength of cell-cell adhesion rather than to the basic capacity for cell-cell adhesion.

The protein resides in the cytoplasm. It localises to the cytoskeleton. It is found in the cell junction. The protein localises to the adherens junction. Its subcellular location is the cell membrane. The protein resides in the nucleus. Functionally, associates with the cytoplasmic domain of a variety of cadherins. The association of catenins to cadherins produces a complex which is linked to the actin filament network, and which seems to be of primary importance for cadherins cell-adhesion properties. Can associate with both E- and N-cadherins. Originally believed to be a stable component of E-cadherin/catenin adhesion complexes and to mediate the linkage of cadherins to the actin cytoskeleton at adherens junctions. In contrast, cortical actin was found to be much more dynamic than E-cadherin/catenin complexes and CTNNA1 was shown not to bind to F-actin when assembled in the complex suggesting a different linkage between actin and adherens junctions components. The homodimeric form may regulate actin filament assembly and inhibit actin branching by competing with the Arp2/3 complex for binding to actin filaments. Involved in the regulation of WWTR1/TAZ, YAP1 and TGFB1-dependent SMAD2 and SMAD3 nuclear accumulation. May play a crucial role in cell differentiation. The sequence is that of Catenin alpha-1 from Oryctolagus cuniculus (Rabbit).